Here is a 526-residue protein sequence, read N- to C-terminus: Neutrophil cytosol factor 2 (526 aa).

3 TPR repeats span residues 37-70 (SRIC…DKHL), 71-104 (AVAY…LRGN), and 121-154 (CEVL…KSEP). Thr233 bears the Phosphothreonine mark. The 60-residue stretch at 240–299 (LEGEAHRVLFGFVPETKEELQVMPGNIVFVLKKGNDNWATVMFNGQKGLVPCNYLEPVEL) folds into the SH3 1 domain. The segment covering 303-315 (PQQQPQEESSPQS) has biased composition (low complexity). The segment at 303 to 346 (PQQQPQEESSPQSDIPAPPSSKAPGRPQLSPGQKQKEEPKEVKL) is disordered. Residues 336-345 (KQKEEPKEVK) show a composition bias toward basic and acidic residues. The region spanning 351-429 (PYTLKVHYKY…YCLTLWCENT (79 aa)) is the PB1 domain. Ser399 carries the post-translational modification Phosphoserine. The segment at 433–458 (QGFPDEPKESEKADANNQTTEPQLKK) is disordered. Over residues 437–446 (DEPKESEKAD) the composition is skewed to basic and acidic residues. An SH3 2 domain is found at 457 to 516 (KKGSQVEALFSYEATQPEDLEFQEGDIILVLSKVNEEWLEGECKGKVGIFPKVFVEDCAT).

This sequence belongs to the NCF2/NOXA1 family. In terms of assembly, component of the phagocyte NADPH oxidase complex composed of an obligatory core heterodimer formed by the membrane proteins CYBA and CYBB and the cytosolic regulatory subunits NCF1/p47-phox, NCF2/p67-phox, NCF4/p40-phox and the small GTPase RAC1 or RAC2. Part of a cytosolic complex composed at least by NCF1, NCF2 and NCF4. Interacts with NCF4. Interacts (via the C-terminal SH3 domain) with NCF1 (via C-terminus). Interacts with SYTL1 and RAC1. May interact with NOXO1. Interacts with S100A8 and calprotectin (S100A8/9). Interacts with GBP7 (via GB1/RHD3-type G domain). Interacts with CYBB; the interaction is enhanced in the presence of GBP7.

Its subcellular location is the cytoplasm. Its function is as follows. Subunit of the phagocyte NADPH oxidase complex that mediates the transfer of electrons from cytosolic NADPH to O2 to produce the superoxide anion (O2(-)). In the activated complex, electrons are first transferred from NADPH to flavin adenine dinucleotide (FAD) and subsequently transferred via two heme molecules to molecular oxygen, producing superoxide through an outer-sphere reaction. Activation of the NADPH oxidase complex is initiated by the assembly of cytosolic subunits of the NADPH oxidase complex with the core NADPH oxidase complex to form a complex at the plasma membrane or phagosomal membrane. This activation process is initiated by phosphorylation dependent binding of the cytosolic NCF1/p47-phox subunit to the C-terminus of CYBA/p22-phox. The sequence is that of Neutrophil cytosol factor 2 from Homo sapiens (Human).